A 211-amino-acid chain; its full sequence is 3,4-dihydroxy-2-butanone 4-phosphate synthase (211 aa).

D-ribulose 5-phosphate-binding positions include 37-38, Asp42, 150-154, and Glu174; these read RE and RIGHT. Glu38 contacts Mg(2+). His153 serves as a coordination point for Mg(2+).

It belongs to the DHBP synthase family. As to quaternary structure, homodimer. Requires Mg(2+) as cofactor. Mn(2+) is required as a cofactor.

It catalyses the reaction D-ribulose 5-phosphate = (2S)-2-hydroxy-3-oxobutyl phosphate + formate + H(+). It functions in the pathway cofactor biosynthesis; riboflavin biosynthesis; 2-hydroxy-3-oxobutyl phosphate from D-ribulose 5-phosphate: step 1/1. Its function is as follows. Catalyzes the conversion of D-ribulose 5-phosphate to formate and 3,4-dihydroxy-2-butanone 4-phosphate. The protein is 3,4-dihydroxy-2-butanone 4-phosphate synthase of Buchnera aphidicola subsp. Baizongia pistaciae (strain Bp).